The chain runs to 519 residues: Ribonuclease Y (519 aa).

A helical transmembrane segment spans residues 3–23 (LMIFAYIAIGAVLGAGTGYLL). Residues 209-272 (TVTAVTLPSE…QVAKMALERL (64 aa)) enclose the KH domain. The HD domain maps to 335-428 (VLQHSLEVSA…VQAADSISGA (94 aa)).

It belongs to the RNase Y family.

The protein resides in the cell membrane. In terms of biological role, endoribonuclease that initiates mRNA decay. This is Ribonuclease Y from Nitratidesulfovibrio vulgaris (strain ATCC 29579 / DSM 644 / CCUG 34227 / NCIMB 8303 / VKM B-1760 / Hildenborough) (Desulfovibrio vulgaris).